Consider the following 142-residue polypeptide: Putative pre-16S rRNA nuclease (142 aa).

This sequence belongs to the YqgF nuclease family.

The protein resides in the cytoplasm. In terms of biological role, could be a nuclease involved in processing of the 5'-end of pre-16S rRNA. In Blochmanniella floridana, this protein is Putative pre-16S rRNA nuclease.